A 689-amino-acid polypeptide reads, in one-letter code: DNA ligase (689 aa).

NAD(+)-binding positions include 40–44 (DSEYD), 89–90 (SL), and glutamate 121. Lysine 123 serves as the catalytic N6-AMP-lysine intermediate. NAD(+) contacts are provided by arginine 144, glutamate 179, lysine 295, and lysine 319. Residues cysteine 413, cysteine 416, cysteine 431, and cysteine 437 each contribute to the Zn(2+) site. The BRCT domain maps to 610 to 689 (REQSSLTDKI…EEWLTLIKNV (80 aa)).

Belongs to the NAD-dependent DNA ligase family. LigA subfamily. Mg(2+) serves as cofactor. It depends on Mn(2+) as a cofactor.

The catalysed reaction is NAD(+) + (deoxyribonucleotide)n-3'-hydroxyl + 5'-phospho-(deoxyribonucleotide)m = (deoxyribonucleotide)n+m + AMP + beta-nicotinamide D-nucleotide.. Its function is as follows. DNA ligase that catalyzes the formation of phosphodiester linkages between 5'-phosphoryl and 3'-hydroxyl groups in double-stranded DNA using NAD as a coenzyme and as the energy source for the reaction. It is essential for DNA replication and repair of damaged DNA. The polypeptide is DNA ligase (Rickettsia massiliae (strain Mtu5)).